The following is a 710-amino-acid chain: MHDPVKKSAHLTAGSTSTAEKLCFDKNEFMKANFSVDEFLHKNRNAPSLEQLRDNLGLYLKGLRAAMIDLINEDYADFVNLSANLVGLDQNIKTIQQPLEQFRSDIESIHGLIDENVTELRAQLEEKRQLREFKRGLQSLKKVYETINKLQDLIDRKLSGEQPIKAVDLERAALDLIQLKFHEKHCFKHLSPDHQGKIQQLEEQLHQHLRRFFNDALSQARNSAPESLERCLRIYITLNACDQAECAFREDVVAPYMTGVIGEQQLQNSPQGLAGIYSKILNFISLHMTDLLRLTLYSDKFPGFNFVVNSYWSDVETRLELHMNSIFAPGNSEVFYVKYKCTRDFLGKIEELLTCSGEQAVTFYRQHKQTKSFEARWNLPVYFQICFQEIAGKFEAQLEPVLQEDSLKDNLTDSDYKISAFNAAKEAMTRCWAEGVYLPEVFPKFYKLNVQVVLRLSRWITDAITQSKGSNFSKPYTRNQLLIALHADIRKLDAHLPELQQLIIKSVPVEQCTKIFSDVLAKSMSCLADTLGAHLTNIQKTLVELLIGECETENVRQVNDLPRLYRKTNREVPTRCSSYVEQMLRPLKAFAQQNESQLGTLVVEQILAEVASHITKAYFNVVSDVLTSVQKTEESLRRLRNVKSGGAATVSTGSSAVMSDDDKIRVQLRVDVTSWRQELCKLNFQATQIDKLVELTNMVEDSIKLKDNSA.

This sequence belongs to the COG2 family. As to quaternary structure, component of the conserved oligomeric Golgi complex which is composed of eight different subunits and is required for normal Golgi morphology and localization.

The protein resides in the golgi apparatus membrane. Its function is as follows. Required for normal Golgi morphology and function. This is Conserved oligomeric Golgi complex subunit 2 from Drosophila melanogaster (Fruit fly).